We begin with the raw amino-acid sequence, 501 residues long: Glutamyl-tRNA(Gln) amidotransferase subunit A (501 aa).

Residues Lys80 and Ser155 each act as charge relay system in the active site. The Acyl-ester intermediate role is filled by Ser179.

The protein belongs to the amidase family. GatA subfamily. As to quaternary structure, heterotrimer of A, B and C subunits.

The enzyme catalyses L-glutamyl-tRNA(Gln) + L-glutamine + ATP + H2O = L-glutaminyl-tRNA(Gln) + L-glutamate + ADP + phosphate + H(+). Allows the formation of correctly charged Gln-tRNA(Gln) through the transamidation of misacylated Glu-tRNA(Gln) in organisms which lack glutaminyl-tRNA synthetase. The reaction takes place in the presence of glutamine and ATP through an activated gamma-phospho-Glu-tRNA(Gln). The protein is Glutamyl-tRNA(Gln) amidotransferase subunit A of Cutibacterium acnes (strain DSM 16379 / KPA171202) (Propionibacterium acnes).